A 319-amino-acid polypeptide reads, in one-letter code: Vomeronasal type-1 receptor 51 (319 aa).

The Extracellular portion of the chain corresponds to 1–31 (MNEILFFSPQPLFSHMMNENSRVHTHSNLRH). A helical transmembrane segment spans residues 32 to 52 (IFFSEIGIGISGNSFLLLFHI). The Cytoplasmic segment spans residues 53–65 (LKFIHGHRSRLSD). A helical membrane pass occupies residues 66-86 (LPIGLLSLIHLLMLLVMAFIA). Over 87-109 (TDIFISWRGWDDIICKFLVYLYR) the chain is Extracellular. A disulfide bond links Cys101 and Cys188. A helical membrane pass occupies residues 110-130 (VLRGLSLCTTSMLSVLQAIIL). The Cytoplasmic portion of the chain corresponds to 131–150 (SPRSSCLAKFKRKSLHHISC). Residues 151–171 (AILFLSVLYMLIGSQLLVSII) traverse the membrane as a helical segment. Topologically, residues 172–203 (ATPNLTTNDFIYVTQSCSILPLSYVMQSMFST) are extracellular. Asn175 is a glycosylation site (N-linked (GlcNAc...) asparagine). The chain crosses the membrane as a helical span at residues 204–224 (LLVIRDVFLISLMVLSTWYMV). The Cytoplasmic segment spans residues 225 to 254 (ALLCRHRKKTQHLQGISLSPKTSPKQRATQ). A helical transmembrane segment spans residues 255–275 (TLLMLMSFFVLMTIYDTIVSC). The Extracellular portion of the chain corresponds to 276 to 285 (SRTMFLNDPT). A helical transmembrane segment spans residues 286–306 (SYNMQIFVVHIYATVSPFVFM). Over 307–319 (STEKHIVNCLRSV) the chain is Cytoplasmic.

The protein belongs to the G-protein coupled receptor 1 family. In terms of tissue distribution, expressed in a subset of sensory neurons located in the apical layer of the vomeronasal organ.

It localises to the cell membrane. Putative pheromone receptor implicated in the regulation of social as well as reproductive behavior. This is Vomeronasal type-1 receptor 51 (Vmn1r51) from Mus musculus (Mouse).